The primary structure comprises 455 residues: Gamma-glutamyl phosphate reductase (455 aa).

Belongs to the gamma-glutamyl phosphate reductase family.

It is found in the cytoplasm. The catalysed reaction is L-glutamate 5-semialdehyde + phosphate + NADP(+) = L-glutamyl 5-phosphate + NADPH + H(+). The protein operates within amino-acid biosynthesis; L-proline biosynthesis; L-glutamate 5-semialdehyde from L-glutamate: step 2/2. Its function is as follows. Catalyzes the NADPH-dependent reduction of L-glutamate 5-phosphate into L-glutamate 5-semialdehyde and phosphate. The product spontaneously undergoes cyclization to form 1-pyrroline-5-carboxylate. In Synechococcus sp. (strain JA-3-3Ab) (Cyanobacteria bacterium Yellowstone A-Prime), this protein is Gamma-glutamyl phosphate reductase.